The primary structure comprises 69 residues: MKNLLICIIKMYRKYISPLKRPSCRFYPTCSQYSLEAIEKYGALKGTLISIKRILKCHPFNKGGYDPVK.

It belongs to the UPF0161 family.

It is found in the cell membrane. Functionally, could be involved in insertion of integral membrane proteins into the membrane. This chain is Putative membrane protein insertion efficiency factor, found in Clostridium botulinum (strain Okra / Type B1).